Here is a 276-residue protein sequence, read N- to C-terminus: NH(3)-dependent NAD(+) synthetase (276 aa).

Gly-43 to Ser-50 is a binding site for ATP. Asp-49 lines the Mg(2+) pocket. Deamido-NAD(+) is bound at residue Arg-146. Thr-166 is a binding site for ATP. Glu-171 is a Mg(2+) binding site. Deamido-NAD(+) contacts are provided by Lys-179 and Asp-186. ATP contacts are provided by Lys-195 and Thr-217. His-266 to Lys-267 contributes to the deamido-NAD(+) binding site.

This sequence belongs to the NAD synthetase family. As to quaternary structure, homodimer.

It catalyses the reaction deamido-NAD(+) + NH4(+) + ATP = AMP + diphosphate + NAD(+) + H(+). The protein operates within cofactor biosynthesis; NAD(+) biosynthesis; NAD(+) from deamido-NAD(+) (ammonia route): step 1/1. Catalyzes the ATP-dependent amidation of deamido-NAD to form NAD. Uses ammonia as a nitrogen source. The sequence is that of NH(3)-dependent NAD(+) synthetase from Shewanella sediminis (strain HAW-EB3).